A 102-amino-acid chain; its full sequence is Large ribosomal subunit protein uL23 (102 aa).

Belongs to the universal ribosomal protein uL23 family. As to quaternary structure, part of the 50S ribosomal subunit. Contacts protein L29, and trigger factor when it is bound to the ribosome.

Its function is as follows. One of the early assembly proteins it binds 23S rRNA. One of the proteins that surrounds the polypeptide exit tunnel on the outside of the ribosome. Forms the main docking site for trigger factor binding to the ribosome. The sequence is that of Large ribosomal subunit protein uL23 from Paramagnetospirillum magneticum (strain ATCC 700264 / AMB-1) (Magnetospirillum magneticum).